The following is a 249-amino-acid chain: Glutathione S-transferase tcpG (249 aa).

The 90-residue stretch at 20–109 folds into the GST N-terminal domain; that stretch reads LYVRKAIPAP…YLCDKHDKDG (90 aa). Residues 115 to 249 form the GST C-terminal domain; the sequence is NATERAQVTS…TEEEIELHGR (135 aa).

This sequence belongs to the GST superfamily.

The catalysed reaction is RX + glutathione = an S-substituted glutathione + a halide anion + H(+). It functions in the pathway secondary metabolite biosynthesis. Glutathione S-transferase; part of the gene cluster that mediates the biosynthesis of an unusual class of epipolythiodioxopiperazines (ETPs) lacking the reactive thiol group important for toxicity. Firstly, L-tyrosine is prenylated by tcpD, before undergoing condensation with L-glycine in a reaction catalyzed by the NRPS tcpP leading to the diketopiperazine (DKP) backbone. Afterwards the alpha-carbon of tyrosine is oxidized by the cytochrome P450 tcpC to form a hydroxyl group. However, in contrast other ETP biosynthesis pathways studied so far, tcpC is not able to bishydroxylate the DKP at both alpha-carbon positions, but hydroxylates the alpha-carbon of the tyrosine part and the nitrogen of the glycine part. The next steps involve an alpha,beta-elimination reaction catalyzed by tcpI, a methylation by the methyltransferase tcpN the action of the four enzyme cascade tcpG/K/J/I. Due to a dysfunctional cytochrome P450 monooxygenase tcpC, the pathway leads to the biosynthesis of probable non-toxic metabolites lacking the reactive thiol group. This chain is Glutathione S-transferase tcpG, found in Claviceps purpurea (strain 20.1) (Ergot fungus).